Consider the following 420-residue polypeptide: UDP-N-acetyl-D-mannosamine dehydrogenase (420 aa).

Residues Tyr13, Ile14, Asp33, Thr85, and Thr126 each contribute to the NAD(+) site. UDP-N-acetyl-alpha-D-mannosaminouronate is bound by residues Arg160, Val161, Lys212, Asn216, Arg219, His250, Arg252, and Gly263. The Proton donor/acceptor role is filled by Lys212. The active-site Nucleophile is Cys266. Residues Phe330 and Lys331 each contribute to the UDP-N-acetyl-alpha-D-mannosaminouronate site. Arg338 contacts NAD(+). A UDP-N-acetyl-alpha-D-mannosaminouronate-binding site is contributed by Lys416.

The protein belongs to the UDP-glucose/GDP-mannose dehydrogenase family. WecC subfamily. As to quaternary structure, homodimer.

It catalyses the reaction UDP-N-acetyl-alpha-D-mannosamine + 2 NAD(+) + H2O = UDP-N-acetyl-alpha-D-mannosaminouronate + 2 NADH + 3 H(+). It participates in bacterial outer membrane biogenesis; enterobacterial common antigen biosynthesis. Catalyzes the four-electron oxidation of UDP-N-acetyl-D-mannosamine (UDP-ManNAc), reducing NAD(+) and releasing UDP-N-acetylmannosaminuronic acid (UDP-ManNAcA). In Yersinia pestis, this protein is UDP-N-acetyl-D-mannosamine dehydrogenase.